We begin with the raw amino-acid sequence, 464 residues long: Cysteine--tRNA ligase (464 aa).

C27 contributes to the Zn(2+) binding site. Residues 29-39 (PTVYNFFHIGN) carry the 'HIGH' region motif. Zn(2+) is bound by residues C207, H232, and E236. The 'KMSKS' region motif lies at 264 to 268 (KMSKS). K267 is an ATP binding site.

Belongs to the class-I aminoacyl-tRNA synthetase family. As to quaternary structure, monomer. Zn(2+) is required as a cofactor.

The protein localises to the cytoplasm. It carries out the reaction tRNA(Cys) + L-cysteine + ATP = L-cysteinyl-tRNA(Cys) + AMP + diphosphate. This is Cysteine--tRNA ligase from Clostridium acetobutylicum (strain ATCC 824 / DSM 792 / JCM 1419 / IAM 19013 / LMG 5710 / NBRC 13948 / NRRL B-527 / VKM B-1787 / 2291 / W).